A 343-amino-acid polypeptide reads, in one-letter code: Heat-inducible transcription repressor HrcA (343 aa).

The protein belongs to the HrcA family.

Negative regulator of class I heat shock genes (grpE-dnaK-dnaJ and groELS operons). Prevents heat-shock induction of these operons. In Bacillus velezensis (strain DSM 23117 / BGSC 10A6 / LMG 26770 / FZB42) (Bacillus amyloliquefaciens subsp. plantarum), this protein is Heat-inducible transcription repressor HrcA.